The primary structure comprises 1220 residues: Plasma membrane calcium-transporting ATPase 3 (1220 aa).

Residues 1–20 are compositionally biased toward polar residues; sequence MGDMANSSIEFHPKPQQQRD. The disordered stretch occupies residues 1 to 23; the sequence is MGDMANSSIEFHPKPQQQRDVPQ. Residues 1-97 lie on the Cytoplasmic side of the membrane; it reads MGDMANSSIE…NFIPPKQPKT (97 aa). Ser8 carries the post-translational modification Phosphoserine. A helical membrane pass occupies residues 98-118; the sequence is FLQLVWEALQDVTLIILEVAA. At 119-155 the chain is on the extracellular side; that stretch reads IVSLGLSFYAPPGEESEACGNVSGGAEDEGEAEAGWI. The chain crosses the membrane as a helical span at residues 156-176; the sequence is EGAAILLSVICVVLVTAFNDW. Topologically, residues 177-364 are cytoplasmic; that stretch reads SKEKQFRGLQ…KEKSVLQGKL (188 aa). Positions 298 to 355 are disordered; it reads EEEKKDKKGKQQDGAMESSQTKAKKQDGAVAMEMQPLKSAEGGEMEEREKKKANAPKK. 2 stretches are compositionally biased toward basic and acidic residues: residues 299–308 and 342–355; these read EEKKDKKGKQ and MEER…APKK. Residues 365–384 traverse the membrane as a helical segment; that stretch reads TKLAVQIGKAGLVMSAITVI. Residues 385-417 lie on the Extracellular side of the membrane; that stretch reads ILVLYFVIETFVVEGRTWLAECTPVYVQYFVKF. A helical membrane pass occupies residues 418–435; sequence FIIGVTVLVVAVPEGLPL. At 436 to 849 the chain is on the cytoplasmic side; it reads AVTISLAYSV…MWGRNVYDSI (414 aa). The active-site 4-aspartylphosphate intermediate is Asp473. Mg(2+)-binding residues include Asp794 and Asp798. The chain crosses the membrane as a helical span at residues 850–869; sequence SKFLQFQLTVNVVAVIVAFT. Residues 870 to 879 are Extracellular-facing; the sequence is GACITQDSPL. A helical membrane pass occupies residues 880 to 900; it reads KAVQMLWVNLIMDTFASLALA. Residues 901-920 lie on the Cytoplasmic side of the membrane; it reads TEPPTESLLLRKPYGRDKPL. The chain crosses the membrane as a helical span at residues 921 to 943; it reads ISRTMMKNILGHAVYQLAIIFTL. Residues 944–961 lie on the Extracellular side of the membrane; that stretch reads LFVGELFFDIDSGRNAPL. The helical transmembrane segment at 962–983 threads the bilayer; the sequence is HSPPSEHYTIIFNTFVMMQLFN. Over 984–1002 the chain is Cytoplasmic; it reads EINARKIHGERNVFDGIFS. Residues 1003–1024 traverse the membrane as a helical segment; the sequence is NPIFCTIVLGTFGIQIVIVQFG. Residues 1025 to 1034 are Extracellular-facing; that stretch reads GKPFSCSPLS. The helical transmembrane segment at 1035-1056 threads the bilayer; the sequence is TEQWLWCLFVGVGELVWGQVIA. Topologically, residues 1057–1220 are cytoplasmic; the sequence is TIPTSQLKCL…SPLHSVETSL (164 aa). Residue Thr1079 is modified to Phosphothreonine. The segment at 1097-1114 is calmodulin-binding subdomain A; the sequence is LRRGQILWFRGLNRIQTQ. Thr1113 is subject to Phosphothreonine; by PKC. The segment at 1115-1124 is calmodulin-binding subdomain B; that stretch reads IRVVKAFRSS. Residues 1166-1186 are disordered; that stretch reads ENEERLRAPPPPSPNQNNNAI.

This sequence belongs to the cation transport ATPase (P-type) (TC 3.A.3) family. Type IIB subfamily. Interacts with PDZD11. Interacts (via N-terminus) with YWHAE. As to expression, highly expressed in the cerebellum. Expressed in adrenal glands.

Its subcellular location is the cell membrane. It localises to the presynaptic cell membrane. The catalysed reaction is Ca(2+)(in) + ATP + H2O = Ca(2+)(out) + ADP + phosphate + H(+). Down-regulated by YWHAE. ATP-driven Ca(2+) ion pump involved in the maintenance of basal intracellular Ca(2+) levels at the presynaptic terminals. Uses ATP as an energy source to transport cytosolic Ca(2+) ions across the plasma membrane to the extracellular compartment. May counter-transport protons, but the mechanism and the stoichiometry of this Ca(2+)/H(+) exchange remains to be established. This is Plasma membrane calcium-transporting ATPase 3 from Homo sapiens (Human).